The following is a 336-amino-acid chain: tRNA N6-adenosine threonylcarbamoyltransferase (336 aa).

Histidine 114 and histidine 118 together coordinate Fe cation. Residues 136–140, aspartate 169, glycine 182, aspartate 186, and asparagine 275 each bind substrate; that span reads LVSGG. Aspartate 301 lines the Fe cation pocket.

This sequence belongs to the KAE1 / TsaD family. Fe(2+) serves as cofactor.

It is found in the cytoplasm. It catalyses the reaction L-threonylcarbamoyladenylate + adenosine(37) in tRNA = N(6)-L-threonylcarbamoyladenosine(37) in tRNA + AMP + H(+). Functionally, required for the formation of a threonylcarbamoyl group on adenosine at position 37 (t(6)A37) in tRNAs that read codons beginning with adenine. Is involved in the transfer of the threonylcarbamoyl moiety of threonylcarbamoyl-AMP (TC-AMP) to the N6 group of A37, together with TsaE and TsaB. TsaD likely plays a direct catalytic role in this reaction. The chain is tRNA N6-adenosine threonylcarbamoyltransferase from Streptococcus pneumoniae (strain CGSP14).